The chain runs to 447 residues: Na(+)/H(+) antiporter NhaA 2 (447 aa).

The next 11 membrane-spanning stretches (helical) occupy residues 30 to 50 (FIHI…LAVL), 81 to 101 (LHKW…ALEL), 117 to 137 (LLSI…YLLL), 146 to 166 (GWGT…ALLG), 175 to 195 (IFML…VAIG), 199 to 219 (AVDW…RAMA), 220 to 240 (FLGV…WLVI), 315 to 335 (LLHP…NAGV), 350 to 370 (VFVG…WIAV), 383 to 403 (WGMV…ALFI), and 415 to 435 (AAKL…FLCL).

Belongs to the NhaA Na(+)/H(+) (TC 2.A.33) antiporter family.

Its subcellular location is the cell inner membrane. The enzyme catalyses Na(+)(in) + 2 H(+)(out) = Na(+)(out) + 2 H(+)(in). In terms of biological role, na(+)/H(+) antiporter that extrudes sodium in exchange for external protons. In Vibrio vulnificus (strain CMCP6), this protein is Na(+)/H(+) antiporter NhaA 2.